A 654-amino-acid chain; its full sequence is DNA-directed RNA polymerase III subunit RPC3 (654 aa).

Thr-27 carries the post-translational modification Phosphothreonine. 2 disordered regions span residues 381–401 and 422–448; these read LSRK…ASLP and KSLQ…EDPH. Ser-392 and Ser-394 each carry phosphoserine. Over residues 429 to 444 the composition is skewed to acidic residues; the sequence is DTQEEDEEEEDLDADT. Positions 581–602 are leucine-zipper; it reads LEWNMANLLFKKEKLKQENSTL.

This sequence belongs to the eukaryotic RPC3/POLR3C RNA polymerase subunit family. Component of the RNA polymerase III (Pol III) complex consisting of 17 subunits.

The protein localises to the cytoplasm. Its subcellular location is the nucleus. DNA-dependent RNA polymerase catalyzes the transcription of DNA into RNA using the four ribonucleoside triphosphates as substrates. Specific core component of RNA polymerase III which synthesizes small RNAs, such as 5S rRNA and tRNAs. The protein is DNA-directed RNA polymerase III subunit RPC3 (RPC82) of Saccharomyces cerevisiae (strain ATCC 204508 / S288c) (Baker's yeast).